The sequence spans 172 residues: Shikimate kinase (172 aa).

Residue 11 to 16 (ASGKTE) participates in ATP binding. Residue T15 coordinates Mg(2+). Substrate contacts are provided by D33, R57, and G80. Residue R120 coordinates ATP. R142 serves as a coordination point for substrate.

It belongs to the shikimate kinase family. As to quaternary structure, monomer. It depends on Mg(2+) as a cofactor.

It localises to the cytoplasm. The catalysed reaction is shikimate + ATP = 3-phosphoshikimate + ADP + H(+). Its pathway is metabolic intermediate biosynthesis; chorismate biosynthesis; chorismate from D-erythrose 4-phosphate and phosphoenolpyruvate: step 5/7. Catalyzes the specific phosphorylation of the 3-hydroxyl group of shikimic acid using ATP as a cosubstrate. In Flavobacterium psychrophilum (strain ATCC 49511 / DSM 21280 / CIP 103535 / JIP02/86), this protein is Shikimate kinase.